An 83-amino-acid polypeptide reads, in one-letter code: Prolactin-releasing peptide (83 aa).

The N-terminal stretch at 1 to 21 is a signal peptide; sequence MALKTWLLCLLLLSLVLPGAS. Phenylalanine 52 carries the phenylalanine amide modification. The propeptide occupies 57–83; sequence ATPRDVTGLGQLSCLPLDGRTKFSQRG.

As to expression, widely expressed, with highest levels in medulla oblongata and hypothalamus.

Its subcellular location is the secreted. In terms of biological role, stimulates prolactin (PRL) release and regulates the expression of prolactin through its receptor GPR10. May stimulate lactotrophs directly to secrete PRL. This is Prolactin-releasing peptide (Prlh) from Rattus norvegicus (Rat).